A 63-amino-acid chain; its full sequence is Large ribosomal subunit protein uL29 (63 aa).

This sequence belongs to the universal ribosomal protein uL29 family.

The sequence is that of Large ribosomal subunit protein uL29 from Shewanella pealeana (strain ATCC 700345 / ANG-SQ1).